Consider the following 126-residue polypeptide: Histone H2B type 1-B (126 aa).

Over residues methionine 1–lysine 12 the composition is skewed to low complexity. A disordered region spans residues methionine 1–glutamate 36. Residue proline 2 is modified to N-acetylproline. ADP-ribosyl glutamic acid is present on glutamate 3. Residue lysine 6 is modified to N6-(2-hydroxyisobutyryl)lysine; alternate. N6-(beta-hydroxybutyryl)lysine; alternate is present on lysine 6. Lysine 6 carries the N6-acetyllysine; alternate modification. Lysine 6 bears the N6-butyryllysine; alternate mark. Lysine 6 is modified (N6-crotonyllysine; alternate). N6-lactoyllysine; alternate is present on lysine 6. Lysine 6 participates in a covalent cross-link: Glycyl lysine isopeptide (Lys-Gly) (interchain with G-Cter in SUMO2); alternate. Position 7 is an ADP-ribosylserine (serine 7). Lysine 12 is modified (N6-(beta-hydroxybutyryl)lysine; alternate). An N6-acetyllysine; alternate mark is found at lysine 12 and lysine 13. 2 positions are modified to N6-crotonyllysine; alternate: lysine 12 and lysine 13. Residue lysine 12 is modified to N6-lactoyllysine; alternate. N6-(2-hydroxyisobutyryl)lysine; alternate is present on lysine 13. Residue serine 15 is modified to Phosphoserine; by STK4/MST1. N6-acetyllysine; alternate occurs at positions 16, 17, 21, and 24. Lysine 16, lysine 17, lysine 21, and lysine 24 each carry N6-crotonyllysine; alternate. N6-lactoyllysine; alternate occurs at positions 16, 17, 21, and 24. Residue lysine 17 is modified to N6-glutaryllysine; alternate. N6-(2-hydroxyisobutyryl)lysine; alternate occurs at positions 21 and 24. At lysine 21 the chain carries N6-(beta-hydroxybutyryl)lysine; alternate. Position 21 is an N6-butyryllysine; alternate (lysine 21). Residue lysine 21 forms a Glycyl lysine isopeptide (Lys-Gly) (interchain with G-Cter in SUMO2); alternate linkage. The residue at position 25 (lysine 25) is an N6-(2-hydroxyisobutyryl)lysine. Lysine 35 is modified (N6-(2-hydroxyisobutyryl)lysine; alternate). Lysine 35 bears the N6-(beta-hydroxybutyryl)lysine; alternate mark. An N6-crotonyllysine; alternate modification is found at lysine 35. Lysine 35 is subject to N6-glutaryllysine; alternate. An N6-succinyllysine; alternate modification is found at lysine 35. Residue lysine 35 forms a Glycyl lysine isopeptide (Lys-Gly) (interchain with G-Cter in ubiquitin); alternate linkage. Glutamate 36 is subject to PolyADP-ribosyl glutamic acid. Serine 37 is subject to Phosphoserine; by AMPK. An N6-(2-hydroxyisobutyryl)lysine; alternate mark is found at lysine 44, lysine 47, and lysine 58. Lysine 44 carries the post-translational modification N6-lactoyllysine; alternate. Residues lysine 44 and lysine 47 each carry the N6-glutaryllysine; alternate modification. The residue at position 47 (lysine 47) is an N6-methyllysine; alternate. Lysine 58 bears the N6,N6-dimethyllysine; alternate mark. Arginine 80 bears the Dimethylated arginine mark. N6-(2-hydroxyisobutyryl)lysine; alternate is present on lysine 86. Residue lysine 86 is modified to N6-acetyllysine; alternate. The residue at position 86 (lysine 86) is an N6-lactoyllysine; alternate. Lysine 86 is subject to N6,N6,N6-trimethyllysine; alternate. An omega-N-methylarginine mark is found at arginine 87 and arginine 93. Lysine 109 is modified (N6-(2-hydroxyisobutyryl)lysine; alternate). N6-(beta-hydroxybutyryl)lysine; alternate is present on lysine 109. Lysine 109 is modified (N6-lactoyllysine; alternate). Lysine 109 carries the N6-glutaryllysine; alternate modification. Lysine 109 is subject to N6-methyllysine; alternate. Serine 113 is a glycosylation site (O-linked (GlcNAc) serine). Threonine 116 is modified (phosphothreonine). N6-(2-hydroxyisobutyryl)lysine; alternate occurs at positions 117 and 121. Lysine 117 carries the post-translational modification N6-(beta-hydroxybutyryl)lysine; alternate. Residues lysine 117 and lysine 121 each carry the N6-lactoyllysine; alternate modification. 2 positions are modified to N6-glutaryllysine; alternate: lysine 117 and lysine 121. An N6-succinyllysine; alternate mark is found at lysine 117 and lysine 121. Lysine 117 carries the post-translational modification N6-methylated lysine; alternate. Lysine 121 participates in a covalent cross-link: Glycyl lysine isopeptide (Lys-Gly) (interchain with G-Cter in ubiquitin); alternate.

Belongs to the histone H2B family. The nucleosome is a histone octamer containing two molecules each of H2A, H2B, H3 and H4 assembled in one H3-H4 heterotetramer and two H2A-H2B heterodimers. The octamer wraps approximately 147 bp of DNA. In terms of processing, monoubiquitination at Lys-35 (H2BK34Ub) by the MSL1/MSL2 dimer is required for histone H3 'Lys-4' (H3K4me) and 'Lys-79' (H3K79me) methylation and transcription activation at specific gene loci, such as HOXA9 and MEIS1 loci. Similarly, monoubiquitination at Lys-121 (H2BK120Ub) by the RNF20/40 complex gives a specific tag for epigenetic transcriptional activation and is also prerequisite for histone H3 'Lys-4' and 'Lys-79' methylation. It also functions cooperatively with the FACT dimer to stimulate elongation by RNA polymerase II. H2BK120Ub also acts as a regulator of mRNA splicing: deubiquitination by USP49 is required for efficient cotranscriptional splicing of a large set of exons. Phosphorylated on Ser-15 (H2BS14ph) by STK4/MST1 during apoptosis; which facilitates apoptotic chromatin condensation. Also phosphorylated on Ser-15 in response to DNA double strand breaks (DSBs), and in correlation with somatic hypermutation and immunoglobulin class-switch recombination. Phosphorylation at Ser-37 (H2BS36ph) by AMPK in response to stress promotes transcription. Post-translationally, glcNAcylation at Ser-113 promotes monoubiquitination of Lys-121. It fluctuates in response to extracellular glucose, and associates with transcribed genes. In terms of processing, ADP-ribosylated by PARP1 or PARP2 on Ser-7 (H2BS6ADPr) in response to DNA damage. H2BS6ADPr promotes recruitment of CHD1L. Mono-ADP-ribosylated on Glu-3 (H2BE2ADPr) by PARP3 in response to single-strand breaks. Poly ADP-ribosylation on Glu-36 (H2BE35ADPr) by PARP1 regulates adipogenesis: it inhibits phosphorylation at Ser-37 (H2BS36ph), thereby blocking expression of pro-adipogenetic genes. Hydroxybutyrylation of histones is induced by starvation. Post-translationally, crotonylation (Kcr) is specifically present in male germ cells and marks testis-specific genes in post-meiotic cells, including X-linked genes that escape sex chromosome inactivation in haploid cells. Crotonylation marks active promoters and enhancers and confers resistance to transcriptional repressors. It is also associated with post-meiotically activated genes on autosomes. In terms of processing, lactylated in macrophages by EP300/P300 by using lactoyl-CoA directly derived from endogenous or exogenous lactate, leading to stimulates gene transcription.

Its subcellular location is the nucleus. It localises to the chromosome. In terms of biological role, core component of nucleosome. Nucleosomes wrap and compact DNA into chromatin, limiting DNA accessibility to the cellular machineries which require DNA as a template. Histones thereby play a central role in transcription regulation, DNA repair, DNA replication and chromosomal stability. DNA accessibility is regulated via a complex set of post-translational modifications of histones, also called histone code, and nucleosome remodeling. The polypeptide is Histone H2B type 1-B (Mus musculus (Mouse)).